Consider the following 478-residue polypeptide: MAMDSKKEIRLKRELGYFWGTNFLIINIIGAGIFVSPKGVLQHSSMNVGVSLCVWAVCAVLTLTSALCSAEIGITFPYSGAHYYFLKRCFGPLVAFLRLWTSLFLGPGLIASQALLLAEYGVQPFYPSCSAPILPRKCLALAMLWIVGILNSRGVKELSWLQTVSSVLKVGILGVISLSGLFLLVRGKKENVQRLQNAFDAEFPEVSQLIEAIFQGYFAFSGGGCFTCIAGELKKPSKTIPRCIFTGLPLVTVVYLLANISYLTVLTPQEMLSSDAVALTWTDRVIPQFTWTVPFAISASLFINLVINVLETSRVLYIASENGQLPLLFCALNVHSSPFIAVLLIISMASILIVLTNLIDLINYLYFVVSIWTALSIIGILKLRYQEPNLHRPYKVFLPFTFIALGITLSLVLIPLVKSPKLHYIYVFLFLLSGLVFYVPLIHFKVKFVWFQKLTCYLQLLFNICIPDVSDDHIHEES.

The Cytoplasmic segment spans residues 1-14 (MAMDSKKEIRLKRE). Residues 15-35 (LGYFWGTNFLIINIIGAGIFV) form a helical membrane-spanning segment. Over 36–47 (SPKGVLQHSSMN) the chain is Extracellular. The helical transmembrane segment at 48-68 (VGVSLCVWAVCAVLTLTSALC) threads the bilayer. Topologically, residues 69 to 89 (SAEIGITFPYSGAHYYFLKRC) are cytoplasmic. Residues 90–110 (FGPLVAFLRLWTSLFLGPGLI) form a helical membrane-spanning segment. At 111 to 129 (ASQALLLAEYGVQPFYPSC) the chain is on the extracellular side. The chain crosses the membrane as a helical span at residues 130–150 (SAPILPRKCLALAMLWIVGIL). Residues 151–163 (NSRGVKELSWLQT) lie on the Cytoplasmic side of the membrane. The chain crosses the membrane as a helical span at residues 164–184 (VSSVLKVGILGVISLSGLFLL). The Extracellular portion of the chain corresponds to 185–208 (VRGKKENVQRLQNAFDAEFPEVSQ). A helical membrane pass occupies residues 209–229 (LIEAIFQGYFAFSGGGCFTCI). The Cytoplasmic segment spans residues 230–242 (AGELKKPSKTIPR). A helical transmembrane segment spans residues 243 to 263 (CIFTGLPLVTVVYLLANISYL). Over 264 to 288 (TVLTPQEMLSSDAVALTWTDRVIPQ) the chain is Extracellular. Residues 289–309 (FTWTVPFAISASLFINLVINV) traverse the membrane as a helical segment. The Cytoplasmic segment spans residues 310-338 (LETSRVLYIASENGQLPLLFCALNVHSSP). Residues 339–359 (FIAVLLIISMASILIVLTNLI) form a helical membrane-spanning segment. Position 360 (Asp-360) is a topological domain, extracellular. A helical transmembrane segment spans residues 361-381 (LINYLYFVVSIWTALSIIGIL). Residues 382–395 (KLRYQEPNLHRPYK) are Cytoplasmic-facing. Residues 396 to 416 (VFLPFTFIALGITLSLVLIPL) form a helical membrane-spanning segment. At 417–423 (VKSPKLH) the chain is on the extracellular side. A helical membrane pass occupies residues 424–444 (YIYVFLFLLSGLVFYVPLIHF). At 445–478 (KVKFVWFQKLTCYLQLLFNICIPDVSDDHIHEES) the chain is on the cytoplasmic side.

It belongs to the amino acid-polyamine-organocation (APC) superfamily. As to quaternary structure, disulfide-linked heterodimer composed of the catalytic light subunit SLC7A13 and the heavy subunit SLC3A1. In terms of tissue distribution, expressed in renal tubules in the outer stripe of the outer medulla and medullary ray (at protein level). Detected in male but not in female kidney.

The protein resides in the apical cell membrane. The enzyme catalyses L-cystine(out) + L-aspartate(in) = L-cystine(in) + L-aspartate(out). It carries out the reaction L-cystine(out) = L-cystine(in). It catalyses the reaction L-aspartate(in) + L-glutamate(out) = L-aspartate(out) + L-glutamate(in). The catalysed reaction is L-aspartate(in) + L-glutamine(out) = L-aspartate(out) + L-glutamine(in). The enzyme catalyses L-aspartate(in) + L-methionine(out) = L-aspartate(out) + L-methionine(in). It carries out the reaction L-leucine(out) + L-aspartate(in) = L-leucine(in) + L-aspartate(out). It catalyses the reaction L-valine(out) + L-aspartate(in) = L-valine(in) + L-aspartate(out). The catalysed reaction is L-aspartate(in) + L-phenylalanine(out) = L-aspartate(out) + L-phenylalanine(in). The enzyme catalyses L-tyrosine(out) + L-aspartate(in) = L-tyrosine(in) + L-aspartate(out). It carries out the reaction L-tryptophan(out) + L-aspartate(in) = L-tryptophan(in) + L-aspartate(out). Associates with SLC3A1/rBAT to form a functional heterodimeric complex that transports anionic and neutral amino acids across the apical plasma membrane of renal epithelium. Preferentially mediates exchange transport, but can also operate via facilitated diffusion. May act as a major transporter for L-cystine in late proximal tubules, ensuring its reabsorption from the luminal fluid in exchange for cytosolic L-glutamate or L-aspartate. In Mus musculus (Mouse), this protein is Solute carrier family 7 member 13.